We begin with the raw amino-acid sequence, 634 residues long: Chaperone protein dnaK2 (634 aa).

Threonine 197 is subject to Phosphothreonine; by autocatalysis. The segment at 592-634 (IGSSVYQQPGNQPPAPGTPDSNESNDKGGDDDVIDADFTETKD) is disordered. Acidic residues predominate over residues 622 to 634 (DDVIDADFTETKD).

Belongs to the heat shock protein 70 family.

Acts as a chaperone. This chain is Chaperone protein dnaK2 (dnaK2), found in Prochlorococcus marinus subsp. pastoris (strain CCMP1986 / NIES-2087 / MED4).